We begin with the raw amino-acid sequence, 462 residues long: Nuclear factor interleukin-3-regulated protein (462 aa).

Residues 1 to 22 are disordered; the sequence is MQLRKMQTIKKEPAPLDPTSSS. A Glycyl lysine isopeptide (Lys-Gly) (interchain with G-Cter in SUMO2) cross-link involves residue Lys24. The 64-residue stretch at 73–136 folds into the bZIP domain; sequence DAMYWEKRRK…GLISSTAYAQ (64 aa). The interval 79 to 95 is basic motif; sequence KRRKNNEAAKRSREKRR. The interval 99–106 is leucine-zipper; it reads LVLENKLI. The segment at 188–214 is disordered; that stretch reads SDVSEVSSVEHTQESPAQGGCRSPENK. Residue Lys214 forms a Glycyl lysine isopeptide (Lys-Gly) (interchain with G-Cter in SUMO2) linkage. Lys219 participates in a covalent cross-link: Glycyl lysine isopeptide (Lys-Gly) (interchain with G-Cter in SUMO1); alternate. Lys219 participates in a covalent cross-link: Glycyl lysine isopeptide (Lys-Gly) (interchain with G-Cter in SUMO2); alternate. A disordered region spans residues 259–298; that stretch reads PPLLQVHGSTSNSPRTSEADEGVVGKSSDGEDEQQVPKGP. The segment covering 265–274 has biased composition (polar residues); that stretch reads HGSTSNSPRT. The tract at residues 281 to 420 is necessary for transcriptional repression and sufficient for interaction with PER2; that stretch reads VVGKSSDGED…FKTGVVEVKD (140 aa). Ser301 is modified (phosphoserine). Glycyl lysine isopeptide (Lys-Gly) (interchain with G-Cter in SUMO2) cross-links involve residues Lys314, Lys326, Lys332, Lys337, and Lys350. Ser353 carries the phosphoserine modification. Residues Lys360, Lys394, Lys401, Lys406, Lys412, Lys419, Lys424, Lys434, and Lys448 each participate in a glycyl lysine isopeptide (Lys-Gly) (interchain with G-Cter in SUMO2) cross-link.

The protein belongs to the bZIP family. NFIL3 subfamily. As to quaternary structure, homodimer. Binds DNA as a dimer. Interacts with DR1. Interacts with PER2 and CRY2. Interacts with NR0B2. Interacts with NR1D1. Interacts with MYSM1. Expressed in suprachiasmatic nucleus and liver (at protein level). Expressed in suprachiasmatic nucleus, hippocampus, gyrus dentatus, piriform cortex, internal granular layer of olfactory bulb, dorsomedial hypothalamic nucleus, pontine nuclei, granular layer of cerebellum, liver and calvariae osteoblasts. Expressed in natural killer cell precursors in bone marrow.

The protein resides in the nucleus. Its function is as follows. Acts as a transcriptional regulator that recognizes and binds to the sequence 5'-[GA]TTA[CT]GTAA[CT]-3', a sequence present in many cellular and viral promoters. Represses transcription from promoters with activating transcription factor (ATF) sites. Represses promoter activity in osteoblasts. Represses transcriptional activity of PER1. Represses transcriptional activity of PER2 via the B-site on the promoter. Activates transcription from the interleukin-3 promoter in T-cells. Competes for the same consensus-binding site with PAR DNA-binding factors (DBP, HLF and TEF). Component of the circadian clock that acts as a negative regulator for the circadian expression of PER2 oscillation in the cell-autonomous core clock. Protects pro-B cells from programmed cell death. Represses the transcription of CYP2A5. Positively regulates the expression and activity of CES2 by antagonizing the repressive action of NR1D1 on CES2. Required for the development of natural killer cell precursors. The chain is Nuclear factor interleukin-3-regulated protein (Nfil3) from Mus musculus (Mouse).